A 204-amino-acid polypeptide reads, in one-letter code: Probable proteasome subunit beta type-3 (204 aa).

The protein belongs to the peptidase T1B family. The 26S proteasome consists of a 20S proteasome core and two 19S regulatory subunits. The 20S proteasome core is composed of 28 subunits that are arranged in four stacked rings, resulting in a barrel-shaped structure. The two end rings are each formed by seven alpha subunits, and the two central rings are each formed by seven beta subunits. The catalytic chamber with the active sites is on the inside of the barrel.

Its subcellular location is the cytoplasm. The protein localises to the nucleus. In terms of biological role, non-catalytic component of the proteasome, a multicatalytic proteinase complex which is characterized by its ability to cleave peptides with Arg, Phe, Tyr, Leu, and Glu adjacent to the leaving group at neutral or slightly basic pH. The proteasome has an ATP-dependent proteolytic activity. The protein is Probable proteasome subunit beta type-3 (pup3) of Schizosaccharomyces pombe (strain 972 / ATCC 24843) (Fission yeast).